We begin with the raw amino-acid sequence, 496 residues long: Glycylpeptide N-tetradecanoyltransferase 1 (496 aa).

The interval 1–82 (MADESETAVK…SAQDQPVKMN (82 aa)) is disordered. 2 positions are modified to phosphoserine: Ser-31 and Ser-47. Basic residues predominate over residues 55-66 (KKKKKKQKKKKE). Ser-83 bears the Phosphoserine mark. Gln-118, Phe-119, Trp-120, Phe-247, Leu-248, Cys-249, Val-250, Ser-256, Arg-258, Val-259, and Ala-260 together coordinate tetradecanoyl-CoA.

It belongs to the NMT family. Heart, gut, kidney, liver and placenta.

It localises to the cytoplasm. The protein resides in the cytosol. The protein localises to the membrane. The catalysed reaction is N-terminal glycyl-[protein] + tetradecanoyl-CoA = N-tetradecanoylglycyl-[protein] + CoA + H(+). It catalyses the reaction N-terminal glycyl-L-lysyl-[protein] + tetradecanoyl-CoA = N-terminal glycyl-(N(6)-tetradecanoyl)-L-lysyl-[protein] + CoA + H(+). Functionally, adds a myristoyl group to the N-terminal glycine residue of certain cellular and viral proteins. Also able to mediate N-terminal lysine myristoylation of proteins: catalyzes myristoylation of ARF6 on both 'Gly-2' and 'Lys-3'. Lysine myristoylation is required to maintain ARF6 on membranes during the GTPase cycle. This chain is Glycylpeptide N-tetradecanoyltransferase 1, found in Homo sapiens (Human).